A 168-amino-acid polypeptide reads, in one-letter code: Cell division inhibitor SulA (168 aa).

The segment at 105-111 is ftsZ binding; the sequence is ALLTGNY. The lon protease binding stretch occupies residues 161 to 168; that stretch reads KIHSTLYH.

Belongs to the SulA family. Interacts with FtsZ. Is rapidly cleaved and degraded by the Lon protease once DNA damage is repaired.

Its function is as follows. Component of the SOS system and an inhibitor of cell division. Accumulation of SulA causes rapid cessation of cell division and the appearance of long, non-septate filaments. In the presence of GTP, binds a polymerization-competent form of FtsZ in a 1:1 ratio, thus inhibiting FtsZ polymerization and therefore preventing it from participating in the assembly of the Z ring. This mechanism prevents the premature segregation of damaged DNA to daughter cells during cell division. This is Cell division inhibitor SulA from Pectobacterium carotovorum subsp. carotovorum (strain PC1).